The primary structure comprises 504 residues: Beta-xylosidase (504 aa).

The active-site Proton donor is Glu-160. The active-site Nucleophile is Glu-280.

The protein belongs to the glycosyl hydrolase 39 family.

The enzyme catalyses Hydrolysis of (1-&gt;4)-beta-D-xylans, to remove successive D-xylose residues from the non-reducing termini.. This is Beta-xylosidase (xynB) from Geobacillus stearothermophilus (Bacillus stearothermophilus).